A 461-amino-acid chain; its full sequence is uncharacterized protein (461 aa).

This is an uncharacterized protein from Saccharomyces cerevisiae (strain ATCC 204508 / S288c) (Baker's yeast).